A 413-amino-acid chain; its full sequence is MEDVVVKQGFLYLQQQQTFGKKWRRFGAALYGGSGCALARLELQEGSEKSRRGEAPRRVIRLNDCLRVSEASGEASSPRDTSTFFLETTERLYLLAAPTAERGDWIQAICLLAFPGRRKELSGLEGKGGRPRMEENELYSSTTAGTPQKEFAVTVRPTEVSERCRLRGSYTLRVGESALELWGGPESGTQLYEWPYRFLRRFGRDKVTFSFEAGRRCVSGEGNFEFETRQGNEIFLALEEAISAQKNAAPPGPQTQPVPVPAVLPRPESPYARPHDSLPPPSPTVPVPTPRQQRGLEGEYAVPFDAVARSLGKSLRGVLAVPPQLPADPLYDSIEDHPPPRPDHIYDEPEGMAALALYDSPQEPRGEAWRRQATADRDSSGLKHGYIVGQDFAASGWPQGTEYDNVVLKKGPK.

The PH domain occupies 4 to 114 (VVVKQGFLYL…WIQAICLLAF (111 aa)). The 106-residue stretch at 147–252 (PQKEFAVTVR…SAQKNAAPPG (106 aa)) folds into the IRS-type PTB domain. Residues 247–292 (NAAPPGPQTQPVPVPAVLPRPESPYARPHDSLPPPSPTVPVPTPRQ) are disordered. The segment covering 250 to 268 (PPGPQTQPVPVPAVLPRPE) has biased composition (pro residues). Tyrosine 271 bears the Phosphotyrosine mark. The span at 277–289 (SLPPPSPTVPVPT) shows a compositional bias: pro residues. Residues tyrosine 300 and tyrosine 346 each carry the phosphotyrosine modification. Over residues 362-381 (QEPRGEAWRRQATADRDSSG) the composition is skewed to basic and acidic residues. Residues 362-383 (QEPRGEAWRRQATADRDSSGLK) are disordered.

This sequence belongs to the DOK family. Type A subfamily. Interacts with phosphorylated RASGAP and EGFR. Interacts with RET and NCK. Interacts (via PH domain) with TEK/TIE2 (tyrosine phosphorylated). Post-translationally, on immunoreceptor stimulation, phosphorylated on C-terminal tyrosine residues. Phosphorylation on Tyr-346 is required for binding to the SH2 domain of NCK. Phosphorylation on both Tyr-271 and Tyr-300 is required for interaction with RASGAP. Phosphorylated on tyrosine residues by TEK/TIE2.

DOK proteins are enzymatically inert adaptor or scaffolding proteins. They provide a docking platform for the assembly of multimolecular signaling complexes. DOK2 may modulate the cellular proliferation induced by IL-4, as well as IL-2 and IL-3. May be involved in modulating Bcr-Abl signaling. Attenuates EGF-stimulated MAP kinase activation. The sequence is that of Docking protein 2 (DOK2) from Bos taurus (Bovine).